An 87-amino-acid polypeptide reads, in one-letter code: Translation initiation factor IF-1 2 (87 aa).

In terms of domain architecture, S1-like spans 1–72 (MAKEELLELD…TKGRINFRHK (72 aa)).

Belongs to the IF-1 family. In terms of assembly, component of the 30S ribosomal translation pre-initiation complex which assembles on the 30S ribosome in the order IF-2 and IF-3, IF-1 and N-formylmethionyl-tRNA(fMet); mRNA recruitment can occur at any time during PIC assembly.

It localises to the cytoplasm. One of the essential components for the initiation of protein synthesis. Stabilizes the binding of IF-2 and IF-3 on the 30S subunit to which N-formylmethionyl-tRNA(fMet) subsequently binds. Helps modulate mRNA selection, yielding the 30S pre-initiation complex (PIC). Upon addition of the 50S ribosomal subunit IF-1, IF-2 and IF-3 are released leaving the mature 70S translation initiation complex. This Burkholderia ambifaria (strain ATCC BAA-244 / DSM 16087 / CCUG 44356 / LMG 19182 / AMMD) (Burkholderia cepacia (strain AMMD)) protein is Translation initiation factor IF-1 2.